The chain runs to 655 residues: Archaeal Lon protease (655 aa).

The Cytoplasmic segment spans residues Met1–Ser123. Residue Gly57–Ser64 participates in ATP binding. The helical transmembrane segment at Arg124 to Leu144 threads the bilayer. Arg145 is a topological domain (extracellular). The helical transmembrane segment at Ser146–Phe166 threads the bilayer. Topologically, residues Asn167–Ala655 are cytoplasmic. Residues Gly433–Asn618 form the Lon proteolytic domain. Catalysis depends on residues Ser525 and Lys568.

It belongs to the peptidase S16 family. Archaeal LonB subfamily. As to quaternary structure, homohexamer. Organized in a ring with a central cavity.

It localises to the cell membrane. In terms of biological role, ATP-dependent serine protease that mediates the selective degradation of mutant and abnormal proteins as well as certain short-lived regulatory proteins. Degrades polypeptides processively. The chain is Archaeal Lon protease from Thermoplasma volcanium (strain ATCC 51530 / DSM 4299 / JCM 9571 / NBRC 15438 / GSS1).